A 488-amino-acid chain; its full sequence is Ribulose bisphosphate carboxylase large chain (488 aa).

The substrate site is built by Asn-127 and Thr-177. Catalysis depends on Lys-179, which acts as the Proton acceptor. Position 181 (Lys-181) interacts with substrate. Mg(2+) is bound by residues Lys-205, Asp-207, and Glu-208. The residue at position 205 (Lys-205) is an N6-carboxylysine. The active-site Proton acceptor is His-297. Positions 298, 330, and 382 each coordinate substrate.

Belongs to the RuBisCO large chain family. Type I subfamily. Heterohexadecamer of 8 large chains and 8 small chains. Mg(2+) is required as a cofactor.

It is found in the plastid. The protein localises to the chloroplast. The catalysed reaction is 2 (2R)-3-phosphoglycerate + 2 H(+) = D-ribulose 1,5-bisphosphate + CO2 + H2O. It carries out the reaction D-ribulose 1,5-bisphosphate + O2 = 2-phosphoglycolate + (2R)-3-phosphoglycerate + 2 H(+). RuBisCO catalyzes two reactions: the carboxylation of D-ribulose 1,5-bisphosphate, the primary event in carbon dioxide fixation, as well as the oxidative fragmentation of the pentose substrate in the photorespiration process. Both reactions occur simultaneously and in competition at the same active site. The chain is Ribulose bisphosphate carboxylase large chain from Emiliania huxleyi (Coccolithophore).